A 463-amino-acid polypeptide reads, in one-letter code: DNA repair exonuclease REC1 (463 aa).

2 disordered regions span residues 81–128 (RGST…HTKK) and 172–203 (PSRP…GYQR). The segment covering 90 to 100 (SRPKKRSKLTS) has biased composition (basic residues).

The protein belongs to the rad1 family.

Its subcellular location is the nucleus. It carries out the reaction Exonucleolytic cleavage in the 3'- to 5'-direction to yield nucleoside 5'-phosphates.. In terms of biological role, plays a central role in regulating the genetic system of this fungus. Has a 3'--&gt;5' exonuclease activity. The protein is DNA repair exonuclease REC1 (REC1) of Mycosarcoma maydis (Corn smut fungus).